The sequence spans 574 residues: Glycine--tRNA ligase (574 aa).

Substrate contacts are provided by arginine 96 and glutamate 162. ATP-binding positions include 194–196, 204–209, 327–328, and 450–453; these read RNE, IRLREF, EC, and GIDR. 209-213 contacts substrate; that stretch reads FTQAE. A substrate-binding site is contributed by 446 to 450; it reads EPSYG.

It belongs to the class-II aminoacyl-tRNA synthetase family.

It is found in the cytoplasm. The enzyme catalyses tRNA(Gly) + glycine + ATP = glycyl-tRNA(Gly) + AMP + diphosphate. Its function is as follows. Catalyzes the attachment of glycine to tRNA(Gly). In Methanococcus maripaludis (strain C7 / ATCC BAA-1331), this protein is Glycine--tRNA ligase.